The primary structure comprises 162 residues: Transcription elongation factor GreA (162 aa).

The stretch at 45–65 forms a coiled coil; that stretch reads NAEYHAAKERQLFIEARINEL.

It belongs to the GreA/GreB family.

In terms of biological role, necessary for efficient RNA polymerase transcription elongation past template-encoded arresting sites. The arresting sites in DNA have the property of trapping a certain fraction of elongating RNA polymerases that pass through, resulting in locked ternary complexes. Cleavage of the nascent transcript by cleavage factors such as GreA or GreB allows the resumption of elongation from the new 3'terminus. GreA releases sequences of 2 to 3 nucleotides. This chain is Transcription elongation factor GreA, found in Wolinella succinogenes (strain ATCC 29543 / DSM 1740 / CCUG 13145 / JCM 31913 / LMG 7466 / NCTC 11488 / FDC 602W) (Vibrio succinogenes).